Reading from the N-terminus, the 148-residue chain is Ribosomal RNA large subunit methyltransferase H 2 (148 aa).

S-adenosyl-L-methionine-binding positions include L74, G106, and 125-130 (FSKMTF).

Belongs to the RNA methyltransferase RlmH family. In terms of assembly, homodimer.

Its subcellular location is the cytoplasm. It catalyses the reaction pseudouridine(1915) in 23S rRNA + S-adenosyl-L-methionine = N(3)-methylpseudouridine(1915) in 23S rRNA + S-adenosyl-L-homocysteine + H(+). In terms of biological role, specifically methylates the pseudouridine at position 1915 (m3Psi1915) in 23S rRNA. This chain is Ribosomal RNA large subunit methyltransferase H 2, found in Caldanaerobacter subterraneus subsp. tengcongensis (strain DSM 15242 / JCM 11007 / NBRC 100824 / MB4) (Thermoanaerobacter tengcongensis).